The chain runs to 137 residues: Small ribosomal subunit protein uS9 (137 aa).

The disordered stretch occupies residues 114 to 137; the sequence is DSRMKERKKPGLRGARRGVQFSKR. A compositionally biased stretch (basic residues) spans 118–137; that stretch reads KERKKPGLRGARRGVQFSKR.

The protein belongs to the universal ribosomal protein uS9 family.

The sequence is that of Small ribosomal subunit protein uS9 from Rhodopirellula baltica (strain DSM 10527 / NCIMB 13988 / SH1).